Consider the following 549-residue polypeptide: Oxygen-dependent choline dehydrogenase (549 aa).

4 to 33 lines the FAD pocket; the sequence is DFVIIGSGSAGSAMAYRLSENGRYSVIVIE. Histidine 465 serves as the catalytic Proton acceptor.

It belongs to the GMC oxidoreductase family. FAD is required as a cofactor.

The catalysed reaction is choline + A = betaine aldehyde + AH2. It carries out the reaction betaine aldehyde + NAD(+) + H2O = glycine betaine + NADH + 2 H(+). It participates in amine and polyamine biosynthesis; betaine biosynthesis via choline pathway; betaine aldehyde from choline (cytochrome c reductase route): step 1/1. Involved in the biosynthesis of the osmoprotectant glycine betaine. Catalyzes the oxidation of choline to betaine aldehyde and betaine aldehyde to glycine betaine at the same rate. This is Oxygen-dependent choline dehydrogenase from Brucella suis biovar 1 (strain 1330).